The following is a 254-amino-acid chain: Adenosine 5'-phosphosulfate reductase (254 aa).

Residues cysteine 140, cysteine 141, cysteine 223, and cysteine 226 each contribute to the [4Fe-4S] cluster site. The active-site Nucleophile; cysteine thiosulfonate intermediate is the cysteine 249.

This sequence belongs to the PAPS reductase family. CysH subfamily. It depends on [4Fe-4S] cluster as a cofactor.

Its subcellular location is the cytoplasm. It catalyses the reaction [thioredoxin]-disulfide + sulfite + AMP + 2 H(+) = adenosine 5'-phosphosulfate + [thioredoxin]-dithiol. It functions in the pathway sulfur metabolism; hydrogen sulfide biosynthesis; sulfite from sulfate. In terms of biological role, catalyzes the formation of sulfite from adenosine 5'-phosphosulfate (APS) using thioredoxin as an electron donor. This is Adenosine 5'-phosphosulfate reductase from Mycobacterium bovis (strain ATCC BAA-935 / AF2122/97).